Here is a 166-residue protein sequence, read N- to C-terminus: Large ribosomal subunit protein uL10 (166 aa).

This sequence belongs to the universal ribosomal protein uL10 family. In terms of assembly, part of the ribosomal stalk of the 50S ribosomal subunit. The N-terminus interacts with L11 and the large rRNA to form the base of the stalk. The C-terminus forms an elongated spine to which L12 dimers bind in a sequential fashion forming a multimeric L10(L12)X complex.

Its function is as follows. Forms part of the ribosomal stalk, playing a central role in the interaction of the ribosome with GTP-bound translation factors. This chain is Large ribosomal subunit protein uL10, found in Marinomonas sp. (strain MWYL1).